A 292-amino-acid polypeptide reads, in one-letter code: Recombination-promoting nuclease RpnA (292 aa).

It belongs to the Rpn/YhgA-like nuclease family. Mg(2+) serves as cofactor.

With respect to regulation, inhibited by EDTA, Zn(2+) and by Mg(2+) plus Mn(2+); stimulated by Ca(2+) in the presence of Mg(2+). Functionally, a low activity DNA endonuclease yielding 3'-hydroxyl ends, equally active on ss or dsDNA, not active on dsRNA. Shows no sequence specificity. Upon expression enhances RecA-independent DNA recombination 49-fold, concomitantly reducing viability by 88% and probably inducing DNA damage as measured by induction of the SOS repair response in RecA cells. RecA-independent DNA recombination leads to replacement of recipient genes with large segments of donor DNA rather than DNA addition to the donor strain; increased expression of RpnA leads to smaller replacement segments, suggesting this protein may play a role in generating crossover events. The protein is Recombination-promoting nuclease RpnA of Escherichia coli (strain K12).